Here is a 575-residue protein sequence, read N- to C-terminus: Alpha-(1,6)-fucosyltransferase (575 aa).

Over 1-9 (MRPWTGSWR) the chain is Cytoplasmic. A helical; Signal-anchor for type II membrane protein membrane pass occupies residues 10–30 (WIMLILFAWGTLLFYIGGHLV). Residues 31–575 (RDNDHPDHSS…KYPTYPEAEK (545 aa)) lie on the Lumenal side of the membrane. 3 disulfides stabilise this stretch: C204–C266, C212–C230, and C218–C222. The GT23 domain occupies 206–493 (KAKKLVCNIN…PDASANFHSL (288 aa)). S278 bears the Phosphoserine mark. Residues 299–305 (PRPPYLP) carry the SH3-binding motif. Positions 365 to 366 (RR) are important for donor substrate binding. Residues C465 and C472 are joined by a disulfide bond. Residues 502–563 (QNAHNQIAIY…PSYKVREKIE (62 aa)) enclose the SH3 domain.

This sequence belongs to the glycosyltransferase 23 family. Tyrosine phosphorylated by PKDCC/VLK.

It is found in the golgi apparatus. It localises to the golgi stack membrane. The catalysed reaction is N(4)-{beta-D-GlcNAc-(1-&gt;2)-alpha-D-Man-(1-&gt;3)-[beta-D-GlcNAc-(1-&gt;2)-alpha-D-Man-(1-&gt;6)]-beta-D-Man-(1-&gt;4)-beta-D-GlcNAc-(1-&gt;4)-beta-D-GlcNAc}-L-asparaginyl-[protein] + GDP-beta-L-fucose = an N(4)-{beta-D-GlcNAc-(1-&gt;2)-alpha-D-Man-(1-&gt;3)-[beta-D-GlcNAc-(1-&gt;2)-alpha-D-Man-(1-&gt;6)]-beta-D-Man-(1-&gt;4)-beta-D-GlcNAc-(1-&gt;4)-[alpha-L-Fuc-(1-&gt;6)]-beta-D-GlcNAc}-L-asparaginyl-[protein] + GDP + H(+). The protein operates within protein modification; protein glycosylation. Catalyzes the addition of fucose in alpha 1-6 linkage to the first GlcNAc residue, next to the peptide chains in N-glycans. This is Alpha-(1,6)-fucosyltransferase (FUT8) from Canis lupus familiaris (Dog).